The following is a 417-amino-acid chain: 4-hydroxy-3-methylbut-2-en-1-yl diphosphate synthase (flavodoxin) (417 aa).

[4Fe-4S] cluster is bound by residues Cys-307, Cys-310, Cys-353, and Glu-360.

The protein belongs to the IspG family. The cofactor is [4Fe-4S] cluster.

It catalyses the reaction (2E)-4-hydroxy-3-methylbut-2-enyl diphosphate + oxidized [flavodoxin] + H2O + 2 H(+) = 2-C-methyl-D-erythritol 2,4-cyclic diphosphate + reduced [flavodoxin]. It participates in isoprenoid biosynthesis; isopentenyl diphosphate biosynthesis via DXP pathway; isopentenyl diphosphate from 1-deoxy-D-xylulose 5-phosphate: step 5/6. Its function is as follows. Converts 2C-methyl-D-erythritol 2,4-cyclodiphosphate (ME-2,4cPP) into 1-hydroxy-2-methyl-2-(E)-butenyl 4-diphosphate. The protein is 4-hydroxy-3-methylbut-2-en-1-yl diphosphate synthase (flavodoxin) of Xylella fastidiosa (strain 9a5c).